The chain runs to 456 residues: Peripherin (456 aa).

The span at 1–14 shows a compositional bias: polar residues; that stretch reads MSHSGLRSTSTSYR. The tract at residues 1 to 55 is disordered; the sequence is MSHSGLRSTSTSYRRTLGSSPVPSSYSSSSRLSTSRHFGSPSPGPSSRSSSSAFR. Residues 1–90 form a head region; sequence MSHSGLRSTS…FLTTRSNEKA (90 aa). Residues 16 to 55 show a composition bias toward low complexity; that stretch reads TLGSSPVPSSYSSSSRLSTSRHFGSPSPGPSSRSSSSAFR. The 310-residue stretch at 88–397 folds into the IF rod domain; the sequence is EKAELQELND…KLLEGEESRI (310 aa). The interval 91 to 123 is coil 1A; that stretch reads ELQELNDRFASFIEKVRYLEQQNAVLVTEINQA. The tract at residues 124–134 is linker 1; it reads RSKEPTRASDL. A coil 1B region spans residues 135–230; the sequence is CQQELRELRK…KLHEEELNDV (96 aa). A linker 2 region spans residues 231–252; the sequence is QVSVQAQPVHMEIEAAKQPDLT. The coil 2 stretch occupies residues 253 to 395; the sequence is SALRDIRSQY…YRKLLEGEES (143 aa). Positions 396-456 are tail; sequence RIAVPIHSLT…RKEQSSEGEK (61 aa). Residues 411-456 are disordered; sequence SPAAPEIDPSTETHTRKTVAIKTIETRDGEQVVTESRKEQSSEGEK. Residues 434–456 are compositionally biased toward basic and acidic residues; it reads IETRDGEQVVTESRKEQSSEGEK.

This sequence belongs to the intermediate filament family. As to quaternary structure, forms homodimers (in vitro). Homopolymerizes into a filamentous network (in vitro).

The protein resides in the cytoplasm. The protein localises to the cytoskeleton. Its subcellular location is the cell projection. It localises to the axon. It is found in the perikaryon. Its function is as follows. Class-III neuronal intermediate filament protein. My form an independent structural network without the involvement of other neurofilaments or may cooperate with other neuronal intermediate filament proteins to form a filamentous network. This chain is Peripherin (prph), found in Xenopus laevis (African clawed frog).